A 270-amino-acid polypeptide reads, in one-letter code: Putative hydro-lyase ACIAD2519 (270 aa).

The protein belongs to the D-glutamate cyclase family.

This is Putative hydro-lyase ACIAD2519 from Acinetobacter baylyi (strain ATCC 33305 / BD413 / ADP1).